The chain runs to 115 residues: Large ribosomal subunit protein bL19 (115 aa).

The protein belongs to the bacterial ribosomal protein bL19 family.

This protein is located at the 30S-50S ribosomal subunit interface and may play a role in the structure and function of the aminoacyl-tRNA binding site. This chain is Large ribosomal subunit protein bL19, found in Thermosipho africanus (strain TCF52B).